Consider the following 204-residue polypeptide: Superoxide dismutase [Mn] (204 aa).

Mn(2+)-binding residues include His29, His84, Asp167, and His171.

Belongs to the iron/manganese superoxide dismutase family. In terms of assembly, homotetramer. It depends on Mn(2+) as a cofactor.

It catalyses the reaction 2 superoxide + 2 H(+) = H2O2 + O2. Functionally, destroys superoxide anion radicals which are normally produced within the cells and which are toxic to biological systems. The polypeptide is Superoxide dismutase [Mn] (sodA) (Thermus thermophilus (strain ATCC BAA-163 / DSM 7039 / HB27)).